The chain runs to 24 residues: FLPFIAGMAAKFLPKIFCAISKKC.

The cysteines at positions 18 and 24 are disulfide-linked.

In terms of tissue distribution, expressed by the skin glands.

The protein resides in the secreted. Functionally, antibacterial activity against Gram-positive bacterium S.aureus. This is Brevinin-1Ba from Lithobates berlandieri (Rio Grande leopard frog).